A 378-amino-acid chain; its full sequence is Erythronate-4-phosphate dehydrogenase (378 aa).

The substrate site is built by Ser-45 and Thr-66. Positions 146 and 175 each coordinate NAD(+). Arg-208 is a catalytic residue. Position 232 (Asp-232) interacts with NAD(+). The active site involves Glu-237. His-254 acts as the Proton donor in catalysis. An NAD(+)-binding site is contributed by Gly-257. Tyr-258 serves as a coordination point for substrate.

It belongs to the D-isomer specific 2-hydroxyacid dehydrogenase family. PdxB subfamily. In terms of assembly, homodimer.

It localises to the cytoplasm. The enzyme catalyses 4-phospho-D-erythronate + NAD(+) = (R)-3-hydroxy-2-oxo-4-phosphooxybutanoate + NADH + H(+). It participates in cofactor biosynthesis; pyridoxine 5'-phosphate biosynthesis; pyridoxine 5'-phosphate from D-erythrose 4-phosphate: step 2/5. Functionally, catalyzes the oxidation of erythronate-4-phosphate to 3-hydroxy-2-oxo-4-phosphonooxybutanoate. This chain is Erythronate-4-phosphate dehydrogenase, found in Pectobacterium atrosepticum (strain SCRI 1043 / ATCC BAA-672) (Erwinia carotovora subsp. atroseptica).